Consider the following 1257-residue polypeptide: Period circadian protein homolog 2 (1257 aa).

A disordered region spans residues 1 to 59 (MNGYVDFSPSPTSPTQEPGEPQPTQAVLQEDVDMSSGSSGNENCSTGRDSQGSDCDDSG). Low complexity predominate over residues 8–25 (SPSPTSPTQEPGEPQPTQ). Over residues 35-53 (SSGSSGNENCSTGRDSQGS) the composition is skewed to polar residues. The short motif at 109-118 (LIRTLRELKV) is the Nuclear export signal 1 element. The 68-residue stretch at 179–246 (ITSEYIVKNS…FHSYTTPYKL (68 aa)) folds into the PAS 1 domain. The LXXLL motif lies at 306 to 310 (LCCLL). Residues 319-385 (YEAPRIPPEK…MLAIHKKILQ (67 aa)) form the PAS 2 domain. The region spanning 393–436 (YSPIRFRTRNGEYITLDTSWSSFINPWSRKISFIIGRHKVRVGP) is the PAC domain. The Nuclear export signal 2 signature appears at 460-469 (LTEQIHRLLM). Positions 471–567 (PVPHSGSSGY…RDSSGASLPK (97 aa)) are disordered. Residues 478-482 (SGYGS) are important for protein stability. Composition is skewed to polar residues over residues 493-504 (MSQTSSSDSNGQ) and 518-528 (SGKSQSKSHFS). The segment at 510 to 709 (RRSGIFKTSG…DAAGGLSQEK (200 aa)) is CSNK1E binding domain. Serine 525, serine 528, serine 531, serine 538, and serine 544 each carry phosphoserine. Positions 541-555 (EMQSSPPAQVRSVTT) are enriched in polar residues. Threonine 554 is modified (phosphothreonine). 6 positions are modified to phosphoserine: serine 659, serine 693, serine 697, serine 706, serine 758, and serine 763. Disordered regions lie at residues 678–706 (DKKP…GGLS) and 757–833 (RSRA…CPSA). A Nuclear localization signal motif is present at residues 778–794 (KKTGKNRKLKSKRVKTR). Residues 779-792 (KTGKNRKLKSKRVK) show a composition bias toward basic residues. Residues 821 to 832 (SPSDTSQSSCPS) show a composition bias toward low complexity. Residue threonine 858 is modified to Phosphothreonine. Residues 882–1067 (EFAVQPLPFA…DLCSATGSAL (186 aa)) form an interaction with PPARG region. A Phosphoserine modification is found at serine 939. Residue threonine 964 is modified to Phosphothreonine. Serine 971 carries the phosphoserine modification. A Nuclear export signal 3 motif is present at residues 983–990 (LQLNLLQL). Residues 993–1044 (APESSTGAAGTLGTTGTAASGLDCTSGASRDRQPKAPPTCSEPSDTQNSDAI) are disordered. Over residues 996 to 1014 (SSTGAAGTLGTTGTAASGL) the composition is skewed to low complexity. The segment covering 1033 to 1044 (SEPSDTQNSDAI) has biased composition (polar residues). Residues 1051–1055 (LNLLL) carry the LXXLL motif. Low complexity predominate over residues 1070-1089 (SGASATSDSLGSSSLGCDTS). Residues 1070 to 1108 (SGASATSDSLGSSSLGCDTSRSGAGSSDTSHTSKYFGSI) are disordered. Residues 1090–1108 (RSGAGSSDTSHTSKYFGSI) show a composition bias toward polar residues. A Phosphoserine modification is found at serine 1126. A CRY binding domain region spans residues 1157–1257 (SRDLQAVLKE…LANPRKEAQT (101 aa)). The disordered stretch occupies residues 1226–1257 (EEDSPSLGLCDTSEAKEEESGQLANPRKEAQT).

Homodimer. Component of the circadian core oscillator, which includes the CRY proteins, CLOCK or NPAS2, BMAL1 or BMAL2, CSNK1D and/or CSNK1E, TIMELESS, and the PER proteins. Interacts with CLOCK-BMAL1 (off DNA). Interacts directly with PER1 and PER3, and through a C-terminal domain, with CRY1 and CRY2. Interacts (via PAS 2 domain) with TIMELESS. Interacts with NFIL3. Different large complexes have been identified with different repressive functions. The core of PER complexes is composed of at least PER1, PER2, PER3, CRY1, CRY2, CSNK1D and/or CSNK1E. The large PER complex involved in the repression of transcriptional termination is composed of at least PER2, CDK9, DDX5, DHX9, NCBP1 and POLR2A (active). The large PER complex involved in the histone deacetylation is composed of at least HDAC1, PER2, SFPQ and SIN3A. The large PER complex involved in the histone methylation is composed of at least PER2, CBX3, TRIM28, SUV39H1 and/or SUV39H2; CBX3 mediates the formation of the complex. Interacts with SETX; the interaction inhibits termination of circadian target genes. Interacts with the nuclear receptors HNF4A, NR1D1, NR4A2, RORA, PPARA, PPARG and THRA; the interaction with at least PPARG is ligand dependent. Interacts with PML. Interacts (phosphorylated) with BTRC and FBXW11; the interactions trigger proteasomal degradation. Interacts with NONO and SFPQ. Interacts with CAVIN3. Interacts with MAGEL2. Interacts with MAP1LC3B. Interacts with HNF4A. In terms of processing, acetylated. Deacetylated by SIRT1, resulting in decreased protein stability. Deacetylated by SIRT6, preventing its degradation by the proteasome, resulting in increased protein stability. Post-translationally, phosphorylated by CSNK1E and CSNK1D. Phosphorylation results in PER2 protein degradation. May be dephosphorylated by PP1. Ubiquitinated, leading to its proteasomal degradation. Ubiquitination may be inhibited by CRY1. Expressed in all tissues examined including eye, brain, heart, lung, spleen, liver, pancreas and kidney. In the CNS, highly expressed in the SCN, internal granular layer of granular cells of the olfactory bulb, tuberculum olfactorium, piriform cortex, gyrus dentatus of the hippocampus, cerebellum, pars tuberalis/median eminence, and pituitary, and moderately in the tenia tecta, caudate putamen, accumbens nucleus, superior and inferior colliculus and pineal gland.

The protein localises to the nucleus. The protein resides in the cytoplasm. Its subcellular location is the perinuclear region. Functionally, transcriptional repressor which forms a core component of the circadian clock. The circadian clock, an internal time-keeping system, regulates various physiological processes through the generation of approximately 24 hour circadian rhythms in gene expression, which are translated into rhythms in metabolism and behavior. It is derived from the Latin roots 'circa' (about) and 'diem' (day) and acts as an important regulator of a wide array of physiological functions including metabolism, sleep, body temperature, blood pressure, endocrine, immune, cardiovascular, and renal function. Consists of two major components: the central clock, residing in the suprachiasmatic nucleus (SCN) of the brain, and the peripheral clocks that are present in nearly every tissue and organ system. Both the central and peripheral clocks can be reset by environmental cues, also known as Zeitgebers (German for 'timegivers'). The predominant Zeitgeber for the central clock is light, which is sensed by retina and signals directly to the SCN. The central clock entrains the peripheral clocks through neuronal and hormonal signals, body temperature and feeding-related cues, aligning all clocks with the external light/dark cycle. Circadian rhythms allow an organism to achieve temporal homeostasis with its environment at the molecular level by regulating gene expression to create a peak of protein expression once every 24 hours to control when a particular physiological process is most active with respect to the solar day. Transcription and translation of core clock components (CLOCK, NPAS2, BMAL1, BMAL2, PER1, PER2, PER3, CRY1 and CRY2) plays a critical role in rhythm generation, whereas delays imposed by post-translational modifications (PTMs) are important for determining the period (tau) of the rhythms (tau refers to the period of a rhythm and is the length, in time, of one complete cycle). A diurnal rhythm is synchronized with the day/night cycle, while the ultradian and infradian rhythms have a period shorter and longer than 24 hours, respectively. Disruptions in the circadian rhythms contribute to the pathology of cardiovascular diseases, cancer, metabolic syndrome and aging. A transcription/translation feedback loop (TTFL) forms the core of the molecular circadian clock mechanism. Transcription factors, CLOCK or NPAS2 and BMAL1 or BMAL2, form the positive limb of the feedback loop, act in the form of a heterodimer and activate the transcription of core clock genes and clock-controlled genes (involved in key metabolic processes), harboring E-box elements (5'-CACGTG-3') within their promoters. The core clock genes: PER1/2/3 and CRY1/2 which are transcriptional repressors form the negative limb of the feedback loop and interact with the CLOCK|NPAS2-BMAL1|BMAL2 heterodimer inhibiting its activity and thereby negatively regulating their own expression. This heterodimer also activates nuclear receptors NR1D1/2 and RORA/B/G, which form a second feedback loop and which activate and repress BMAL1 transcription, respectively. PER1 and PER2 proteins transport CRY1 and CRY2 into the nucleus with appropriate circadian timing, but also contribute directly to repression of clock-controlled target genes through interaction with several classes of RNA-binding proteins, helicases and others transcriptional repressors. PER appears to regulate circadian control of transcription by at least three different modes. First, interacts directly with the CLOCK-BMAL1 at the tail end of the nascent transcript peak to recruit complexes containing the SIN3-HDAC that remodel chromatin to repress transcription. Second, brings H3K9 methyltransferases such as SUV39H1 and SUV39H2 to the E-box elements of the circadian target genes, like PER2 itself or PER1. The recruitment of each repressive modifier to the DNA seems to be very precisely temporally orchestrated by the large PER complex, the deacetylases acting before than the methyltransferases. Additionally, large PER complexes are also recruited to the target genes 3' termination site through interactions with RNA-binding proteins and helicases that may play a role in transcription termination to regulate transcription independently of CLOCK-BMAL1 interactions. Recruitment of large PER complexes to the elongating polymerase at PER and CRY termination sites inhibited SETX action, impeding RNA polymerase II release and thereby repressing transcriptional reinitiation. May propagate clock information to metabolic pathways via the interaction with nuclear receptors. Coactivator of PPARA and corepressor of NR1D1, binds rhythmically at the promoter of nuclear receptors target genes like BMAL1 or G6PC1. Directly and specifically represses PPARG proadipogenic activity by blocking PPARG recruitment to target promoters and thereby transcriptional activation. Required for fatty acid and lipid metabolism, is involved as well in the regulation of circulating insulin levels. Plays an important role in the maintenance of cardiovascular functions through the regulation of NO and vasodilatatory prostaglandins production in aortas. Controls circadian glutamate uptake in synaptic vesicles through the regulation of VGLUT1 expression. May also be involved in the regulation of inflammatory processes. Represses the CLOCK-BMAL1 induced transcription of BHLHE40/DEC1 and ATF4. Negatively regulates the formation of the TIMELESS-CRY1 complex by competing with TIMELESS for binding to CRY1. This Rattus norvegicus (Rat) protein is Period circadian protein homolog 2.